The following is a 225-amino-acid chain: MNLFDQFLTPSLLGISLLMPALLMTTILLLNPKNQWLSHPTTTIKSWFINQAAKQIMTPINPTGHKHSLILISLLILLSLTNLLGLLPYTFTPTTQLSMNMAIALPLWLVTVLIGLRTQPTTSLAHLLPEGTPMLLIPILILIETISLLIRPIALGVRLTANLTAGHLLIQLISIATLNLWFMMPPLSLLTSTVLILLLLLEFAVAMIQAYVFVLLLSLYLQENS.

A run of 6 helical transmembrane segments spans residues 10–30 (PSLL…ILLL), 69–89 (LILI…LLPY), 96–116 (QLSM…LIGL), 135–155 (LLIP…PIAL), 168–188 (LLIQ…PPLS), and 194–214 (VLIL…YVFV).

This sequence belongs to the ATPase A chain family. Component of the ATP synthase complex composed at least of ATP5F1A/subunit alpha, ATP5F1B/subunit beta, ATP5MC1/subunit c (homooctomer), MT-ATP6/subunit a, MT-ATP8/subunit 8, ATP5ME/subunit e, ATP5MF/subunit f, ATP5MG/subunit g, ATP5MK/subunit k, ATP5MJ/subunit j, ATP5F1C/subunit gamma, ATP5F1D/subunit delta, ATP5F1E/subunit epsilon, ATP5PF/subunit F6, ATP5PB/subunit b, ATP5PD/subunit d, ATP5PO/subunit OSCP. ATP synthase complex consists of a soluble F(1) head domain (subunits alpha(3) and beta(3)) - the catalytic core - and a membrane F(0) domain - the membrane proton channel (subunits c, a, 8, e, f, g, k and j). These two domains are linked by a central stalk (subunits gamma, delta, and epsilon) rotating inside the F1 region and a stationary peripheral stalk (subunits F6, b, d, and OSCP). Interacts with DNAJC30; interaction is direct.

It is found in the mitochondrion inner membrane. It carries out the reaction H(+)(in) = H(+)(out). Its function is as follows. Subunit a, of the mitochondrial membrane ATP synthase complex (F(1)F(0) ATP synthase or Complex V) that produces ATP from ADP in the presence of a proton gradient across the membrane which is generated by electron transport complexes of the respiratory chain. ATP synthase complex consist of a soluble F(1) head domain - the catalytic core - and a membrane F(1) domain - the membrane proton channel. These two domains are linked by a central stalk rotating inside the F(1) region and a stationary peripheral stalk. During catalysis, ATP synthesis in the catalytic domain of F(1) is coupled via a rotary mechanism of the central stalk subunits to proton translocation. With the subunit c (ATP5MC1), forms the proton-conducting channel in the F(0) domain, that contains two crucial half-channels (inlet and outlet) that facilitate proton movement from the mitochondrial intermembrane space (IMS) into the matrix. Protons are taken up via the inlet half-channel and released through the outlet half-channel, following a Grotthuss mechanism. This chain is ATP synthase F(0) complex subunit a, found in Alligator mississippiensis (American alligator).